The primary structure comprises 212 residues: Imidazole glycerol phosphate synthase subunit HisH (212 aa).

The region spanning 2 to 212 (RVVVIDYNGG…ILGNFLRWTS (211 aa)) is the Glutamine amidotransferase type-1 domain. Cys85 functions as the Nucleophile in the catalytic mechanism. Residues His192 and Glu194 contribute to the active site.

Heterodimer of HisH and HisF.

The protein resides in the cytoplasm. The enzyme catalyses 5-[(5-phospho-1-deoxy-D-ribulos-1-ylimino)methylamino]-1-(5-phospho-beta-D-ribosyl)imidazole-4-carboxamide + L-glutamine = D-erythro-1-(imidazol-4-yl)glycerol 3-phosphate + 5-amino-1-(5-phospho-beta-D-ribosyl)imidazole-4-carboxamide + L-glutamate + H(+). It catalyses the reaction L-glutamine + H2O = L-glutamate + NH4(+). It participates in amino-acid biosynthesis; L-histidine biosynthesis; L-histidine from 5-phospho-alpha-D-ribose 1-diphosphate: step 5/9. Its function is as follows. IGPS catalyzes the conversion of PRFAR and glutamine to IGP, AICAR and glutamate. The HisH subunit catalyzes the hydrolysis of glutamine to glutamate and ammonia as part of the synthesis of IGP and AICAR. The resulting ammonia molecule is channeled to the active site of HisF. The protein is Imidazole glycerol phosphate synthase subunit HisH of Gluconobacter oxydans (strain 621H) (Gluconobacter suboxydans).